Here is a 113-residue protein sequence, read N- to C-terminus: Photosystem II reaction center Psb28 protein (113 aa).

Belongs to the Psb28 family. In terms of assembly, part of the photosystem II complex.

It localises to the cellular thylakoid membrane. The chain is Photosystem II reaction center Psb28 protein from Prochlorococcus marinus (strain NATL2A).